We begin with the raw amino-acid sequence, 1294 residues long: uncharacterized protein (1294 aa).

Residues Met-1–Tyr-375 are Extracellular-facing. An ABC transporter 1 domain is found at Leu-28–Gln-287. N-linked (GlcNAc...) asparagine glycosylation is present at Asn-41. Position 62–69 (Gly-62–Thr-69) interacts with ATP. 6 N-linked (GlcNAc...) asparagine glycosylation sites follow: Asn-86, Asn-101, Asn-151, Asn-341, Asn-349, and Asn-371. Residues Val-376–Tyr-396 traverse the membrane as a helical segment. At Tyr-397–Gln-495 the chain is on the cytoplasmic side. Residues Phe-496 to Val-516 form a helical membrane-spanning segment. The Extracellular segment spans residues Ser-517–Thr-530. Asn-528 is a glycosylation site (N-linked (GlcNAc...) asparagine). Residues Phe-531–Val-551 traverse the membrane as a helical segment. Over Arg-552–Pro-604 the chain is Cytoplasmic. The chain crosses the membrane as a helical span at residues Ala-605–Leu-625. Over His-626–Leu-1038 the chain is Extracellular. Residues Ile-679–Ser-941 enclose the ABC transporter 2 domain. Gly-727–Ser-734 contributes to the ATP binding site. Residue Asn-983 is glycosylated (N-linked (GlcNAc...) asparagine). A helical membrane pass occupies residues Met-1039–Val-1059. Topologically, residues Lys-1060 to Glu-1120 are cytoplasmic. A helical transmembrane segment spans residues Leu-1121 to Leu-1141. At Pro-1142 to Tyr-1266 the chain is on the extracellular side. A helical transmembrane segment spans residues Leu-1267 to Ala-1287. The Cytoplasmic portion of the chain corresponds to Lys-1288 to Trp-1294.

This sequence belongs to the ABC transporter superfamily. ABCG family. PDR (TC 3.A.1.205) subfamily.

It is found in the membrane. This is an uncharacterized protein from Saccharomyces cerevisiae (strain ATCC 204508 / S288c) (Baker's yeast).